The chain runs to 416 residues: Serine hydroxymethyltransferase (416 aa).

(6S)-5,6,7,8-tetrahydrofolate is bound by residues Leu-121 and 125-127; that span reads GHL. Lys-229 bears the N6-(pyridoxal phosphate)lysine mark.

Belongs to the SHMT family. In terms of assembly, homodimer. Pyridoxal 5'-phosphate serves as cofactor.

Its subcellular location is the cytoplasm. The catalysed reaction is (6R)-5,10-methylene-5,6,7,8-tetrahydrofolate + glycine + H2O = (6S)-5,6,7,8-tetrahydrofolate + L-serine. It functions in the pathway one-carbon metabolism; tetrahydrofolate interconversion. Its pathway is amino-acid biosynthesis; glycine biosynthesis; glycine from L-serine: step 1/1. In terms of biological role, catalyzes the reversible interconversion of serine and glycine with tetrahydrofolate (THF) serving as the one-carbon carrier. This reaction serves as the major source of one-carbon groups required for the biosynthesis of purines, thymidylate, methionine, and other important biomolecules. Also exhibits THF-independent aldolase activity toward beta-hydroxyamino acids, producing glycine and aldehydes, via a retro-aldol mechanism. In Dechloromonas aromatica (strain RCB), this protein is Serine hydroxymethyltransferase.